A 561-amino-acid polypeptide reads, in one-letter code: Glutamate--tRNA ligase (561 aa).

The 'HIGH' region signature appears at 107 to 117 (PNPSGPLHLGH).

It belongs to the class-I aminoacyl-tRNA synthetase family. Glutamate--tRNA ligase type 2 subfamily.

It localises to the cytoplasm. It carries out the reaction tRNA(Glu) + L-glutamate + ATP = L-glutamyl-tRNA(Glu) + AMP + diphosphate. In terms of biological role, catalyzes the attachment of glutamate to tRNA(Glu) in a two-step reaction: glutamate is first activated by ATP to form Glu-AMP and then transferred to the acceptor end of tRNA(Glu). The protein is Glutamate--tRNA ligase of Methanoculleus marisnigri (strain ATCC 35101 / DSM 1498 / JR1).